We begin with the raw amino-acid sequence, 444 residues long: Multidrug resistance protein MdtA (444 aa).

The signal sequence occupies residues 1–20 (MKSQSKRTSRLFVFVGVVVA). Residues 37–52 (NNTSGAQQSARGQDTS) are compositionally biased toward polar residues. Disordered stretches follow at residues 37–60 (NNTS…RNTP) and 398–444 (TPRS…AEKS). The span at 409–419 (ASAEKAAAEAE) shows a compositional bias: low complexity. Over residues 435–444 (ARSTTAAEKS) the composition is skewed to polar residues.

This sequence belongs to the membrane fusion protein (MFP) (TC 8.A.1) family. Part of a tripartite efflux system composed of MdtA, MdtB and MdtC.

The protein localises to the cell inner membrane. The polypeptide is Multidrug resistance protein MdtA (Yersinia pseudotuberculosis serotype O:3 (strain YPIII)).